The chain runs to 379 residues: Cytochrome b (379 aa).

The next 4 helical transmembrane spans lie at 33–53 (FGSL…FLAM), 77–98 (WLIR…FIHV), 113–133 (WNIG…GYVL), and 178–198 (FFAF…VHLL). Residues His-83 and His-97 each contribute to the heme b site. 2 residues coordinate heme b: His-182 and His-196. His-201 contributes to the a ubiquinone binding site. A run of 4 helical transmembrane segments spans residues 226-246 (TKDL…ALFF), 288-308 (LGGV…PLLN), 320-340 (VTQV…WIGG), and 347-367 (FTMI…ILMP).

This sequence belongs to the cytochrome b family. As to quaternary structure, the cytochrome bc1 complex contains 11 subunits: 3 respiratory subunits (MT-CYB, CYC1 and UQCRFS1), 2 core proteins (UQCRC1 and UQCRC2) and 6 low-molecular weight proteins (UQCRH/QCR6, UQCRB/QCR7, UQCRQ/QCR8, UQCR10/QCR9, UQCR11/QCR10 and a cleavage product of UQCRFS1). This cytochrome bc1 complex then forms a dimer. Requires heme b as cofactor.

The protein localises to the mitochondrion inner membrane. Its function is as follows. Component of the ubiquinol-cytochrome c reductase complex (complex III or cytochrome b-c1 complex) that is part of the mitochondrial respiratory chain. The b-c1 complex mediates electron transfer from ubiquinol to cytochrome c. Contributes to the generation of a proton gradient across the mitochondrial membrane that is then used for ATP synthesis. The sequence is that of Cytochrome b (MT-CYB) from Akodon fumeus (Smoky grass mouse).